The following is a 1085-amino-acid chain: Carbamoyl phosphate synthase large chain (1085 aa).

A carboxyphosphate synthetic domain region spans residues 1–399 (MPKRTDISNI…ALQKALCSLE (399 aa)). 11 residues coordinate ATP: R127, R167, G174, E206, L208, E213, G239, V240, H241, Q283, and E297. The ATP-grasp 1 domain maps to 131–326 (KEAMLKIGMD…IAKVATMLAV (196 aa)). Mg(2+) contacts are provided by Q283, E297, and N299. Residues Q283, E297, and N299 each contribute to the Mn(2+) site. Residues 400-551 (NNWLGFESLS…YAPNPLPPIG (152 aa)) form an oligomerization domain region. Positions 552–951 (NKQEKQEKKI…AFFKAQTACF (400 aa)) are carbamoyl phosphate synthetic domain. Positions 678 to 871 (SLFLKELDIK…LAKVATRVMV (194 aa)) constitute an ATP-grasp 2 domain. Positions 714, 756, 758, 763, 788, 789, 790, 791, 830, and 842 each coordinate ATP. Mg(2+) is bound by residues Q830, E842, and N844. 3 residues coordinate Mn(2+): Q830, E842, and N844. The MGS-like domain occupies 952-1085 (NPIKNKGLIF…ELLALQDYLK (134 aa)). The allosteric domain stretch occupies residues 952 to 1085 (NPIKNKGLIF…ELLALQDYLK (134 aa)).

The protein belongs to the CarB family. Composed of two chains; the small (or glutamine) chain promotes the hydrolysis of glutamine to ammonia, which is used by the large (or ammonia) chain to synthesize carbamoyl phosphate. Tetramer of heterodimers (alpha,beta)4. Mg(2+) is required as a cofactor. It depends on Mn(2+) as a cofactor.

It catalyses the reaction hydrogencarbonate + L-glutamine + 2 ATP + H2O = carbamoyl phosphate + L-glutamate + 2 ADP + phosphate + 2 H(+). The enzyme catalyses hydrogencarbonate + NH4(+) + 2 ATP = carbamoyl phosphate + 2 ADP + phosphate + 2 H(+). The protein operates within amino-acid biosynthesis; L-arginine biosynthesis; carbamoyl phosphate from bicarbonate: step 1/1. It participates in pyrimidine metabolism; UMP biosynthesis via de novo pathway; (S)-dihydroorotate from bicarbonate: step 1/3. Its function is as follows. Large subunit of the glutamine-dependent carbamoyl phosphate synthetase (CPSase). CPSase catalyzes the formation of carbamoyl phosphate from the ammonia moiety of glutamine, carbonate, and phosphate donated by ATP, constituting the first step of 2 biosynthetic pathways, one leading to arginine and/or urea and the other to pyrimidine nucleotides. The large subunit (synthetase) binds the substrates ammonia (free or transferred from glutamine from the small subunit), hydrogencarbonate and ATP and carries out an ATP-coupled ligase reaction, activating hydrogencarbonate by forming carboxy phosphate which reacts with ammonia to form carbamoyl phosphate. The chain is Carbamoyl phosphate synthase large chain from Helicobacter pylori (strain J99 / ATCC 700824) (Campylobacter pylori J99).